Here is a 437-residue protein sequence, read N- to C-terminus: Methylenetetrahydrofolate--tRNA-(uracil-5-)-methyltransferase TrmFO (437 aa).

8-13 provides a ligand contact to FAD; the sequence is GAGLAG.

Belongs to the MnmG family. TrmFO subfamily. FAD serves as cofactor.

It is found in the cytoplasm. It carries out the reaction uridine(54) in tRNA + (6R)-5,10-methylene-5,6,7,8-tetrahydrofolate + NADH + H(+) = 5-methyluridine(54) in tRNA + (6S)-5,6,7,8-tetrahydrofolate + NAD(+). The catalysed reaction is uridine(54) in tRNA + (6R)-5,10-methylene-5,6,7,8-tetrahydrofolate + NADPH + H(+) = 5-methyluridine(54) in tRNA + (6S)-5,6,7,8-tetrahydrofolate + NADP(+). Catalyzes the folate-dependent formation of 5-methyl-uridine at position 54 (M-5-U54) in all tRNAs. In Desulfitobacterium hafniense (strain Y51), this protein is Methylenetetrahydrofolate--tRNA-(uracil-5-)-methyltransferase TrmFO.